Consider the following 197-residue polypeptide: Imidazoleglycerol-phosphate dehydratase (197 aa).

Belongs to the imidazoleglycerol-phosphate dehydratase family.

It localises to the cytoplasm. The catalysed reaction is D-erythro-1-(imidazol-4-yl)glycerol 3-phosphate = 3-(imidazol-4-yl)-2-oxopropyl phosphate + H2O. It functions in the pathway amino-acid biosynthesis; L-histidine biosynthesis; L-histidine from 5-phospho-alpha-D-ribose 1-diphosphate: step 6/9. In Halorhodospira halophila (strain DSM 244 / SL1) (Ectothiorhodospira halophila (strain DSM 244 / SL1)), this protein is Imidazoleglycerol-phosphate dehydratase.